A 372-amino-acid polypeptide reads, in one-letter code: Geranylgeranyl pyrophosphate synthase 4 (372 aa).

The N-terminal stretch at 1 to 22 (MEAQNIFLYLLIVFLSLHFVFT) is a signal peptide. Residues Lys-121, Arg-124, and His-153 each contribute to the isopentenyl diphosphate site. Mg(2+) is bound by residues Asp-160 and Asp-166. Residue Arg-171 participates in dimethylallyl diphosphate binding. Residue Arg-172 participates in isopentenyl diphosphate binding. Dimethylallyl diphosphate is bound by residues Lys-257, Thr-258, Gln-295, Lys-312, and Lys-322.

The protein belongs to the FPP/GGPP synthase family. Monomer. The cofactor is Mg(2+). Faintly expressed in flowers. Expressed in roots and siliques.

The protein resides in the endoplasmic reticulum. It carries out the reaction isopentenyl diphosphate + dimethylallyl diphosphate = (2E)-geranyl diphosphate + diphosphate. It catalyses the reaction isopentenyl diphosphate + (2E)-geranyl diphosphate = (2E,6E)-farnesyl diphosphate + diphosphate. The catalysed reaction is isopentenyl diphosphate + (2E,6E)-farnesyl diphosphate = (2E,6E,10E)-geranylgeranyl diphosphate + diphosphate. The protein operates within isoprenoid biosynthesis; farnesyl diphosphate biosynthesis; farnesyl diphosphate from geranyl diphosphate and isopentenyl diphosphate: step 1/1. It participates in isoprenoid biosynthesis; geranyl diphosphate biosynthesis; geranyl diphosphate from dimethylallyl diphosphate and isopentenyl diphosphate: step 1/1. It functions in the pathway isoprenoid biosynthesis; geranylgeranyl diphosphate biosynthesis; geranylgeranyl diphosphate from farnesyl diphosphate and isopentenyl diphosphate: step 1/1. Catalyzes the trans-addition of the three molecules of isopentenyl diphosphate (IPP) onto dimethylallyl diphosphate (DMAPP) to form geranylgeranyl diphosphate. The polypeptide is Geranylgeranyl pyrophosphate synthase 4 (Arabidopsis thaliana (Mouse-ear cress)).